A 353-amino-acid polypeptide reads, in one-letter code: WD repeat-containing protein 55 (353 aa).

WD repeat units lie at residues 4 to 43 (DLGANAFGIDFHPSTNLVAAGLIDGHLHLYRYDSDSSLVR), 49 to 88 (AHKESCRAVRFIDDGQRIVTASADCSILATDVETGAQVAH), 92 to 130 (AHEDAVNTLINVTETTIASGDDKGCVKIWDTRQRSCSHE), 133 to 172 (AHEDYISGMTFASDSMKLVVTSGDGTLSVCNLRTSKVQSQ), 175 to 214 (FSEDELLSVVIMKNGRKVICGTQNGTLLLYSWGFFKDCSD), 218 to 257 (DLAPNSVDALLKLDEDRLITGCDNGIISLVGILPNRIIQP), and 260 to 299 (SHDYPIEDLALSHDKKFLGSTAHDSMLKLWNLEEILEGSN). The segment at 300–353 (VNSGNASGAAEDSDSDNDGMDLDNDPSKSSKGSKRKTKSKANTLNATNNFFADL) is disordered. Residues 310 to 323 (EDSDSDNDGMDLDN) show a composition bias toward acidic residues. Positions 339–353 (KANTLNATNNFFADL) are enriched in low complexity.

This sequence belongs to the WD repeat WDR55 family. Interacts with DDB1A. Highly expressed in roots. Expressed in cotyledons, leaves, buds and flowers.

The protein resides in the nucleus. Its subcellular location is the cytoplasm. In terms of biological role, required for male and female gametogenesis, seed development, and embryo and endosperm development at early stages. Involved in the establishment of bilateral symmetry in the transition from the globular to the heart embryo stage. May act in the frame of a CRL4 complex. Required for proper vegetative growth and organization of the adult plant body. May play a role in hormonal control of plant development. This Arabidopsis thaliana (Mouse-ear cress) protein is WD repeat-containing protein 55.